The chain runs to 486 residues: Patatin-like phospholipase domain-containing protein 2 (486 aa).

The Cytoplasmic portion of the chain corresponds to 1-8; the sequence is MFPRETKW. Residues 9-29 form a helical membrane-spanning segment; the sequence is NISFAGCGFLGVYHIGVASCL. The 170-residue stretch at 10–179 folds into the PNPLA domain; sequence ISFAGCGFLG…SDNLPLYELK (170 aa). A GXGXXG motif is present at residues 14–19; sequence GCGFLG. Residues 30–42 lie on the Extracellular side of the membrane; the sequence is REHAPFLVANATH. An N-linked (GlcNAc...) asparagine glycan is attached at N39. Residues 43–63 form a helical membrane-spanning segment; that stretch reads IYGASAGALTATALVTGACLG. Positions 45–49 match the GXSXG motif; that stretch reads GASAG. Catalysis depends on S47, which acts as the Nucleophile. The Cytoplasmic segment spans residues 64–137; it reads EAGANIIEVS…IISHFSSKDE (74 aa). A Glycyl lysine isopeptide (Lys-Gly) (interchain with G-Cter in ubiquitin) cross-link involves residue K92. The chain crosses the membrane as a helical span at residues 138–158; that stretch reads LIQANVCSTFIPVYCGLIPPT. Residues 159–331 are Extracellular-facing; that stretch reads LQGVRYVDGG…TTLSNMLPVR (173 aa). D166 acts as the Proton acceptor in catalysis. Positions 166–168 match the DGA/G motif; the sequence is DGG. A helical transmembrane segment spans residues 332–352; that stretch reads LATAMMVPYTLPLESAVSFTI. Over 353 to 486 the chain is Cytoplasmic; sequence RLLEWLPDVP…PQDPPGLPPC (134 aa). S374 carries the post-translational modification Phosphoserine; in vitro. Phosphoserine; by PKA is present on residues S396 and S406. A phosphoserine; in vitro mark is found at S430 and S468. The segment covering 465-476 has biased composition (low complexity); sequence APASPTAADPAT. The interval 465 to 486 is disordered; sequence APASPTAADPATPQDPPGLPPC. Over residues 477-486 the composition is skewed to pro residues; the sequence is PQDPPGLPPC.

In terms of assembly, interacts with ABHD5; this association stimulates PNPLA2 triglyceride hydrolase activity. Interacts with SERPINF1; this interaction stimulates the phospholipase A2 activity of PNPLA2. Despite a colocalization in lipid droplets, it probably does not interact with PLIN. Interacts with PLIN5; prevents interaction with ABHD5. Interacts with FAF2. In terms of processing, phosphorylation at Ser-406 by PKA is increased during fasting and moderate intensity exercise, and moderately increases lipolytic activity. Ubiquitinated by PEX2 in response to reactive oxygen species (ROS), leading to its degradation. Ubiquitination is stimulated by LDAH. In terms of tissue distribution, expressed at high levels in white and brown adipose tissue, and to a lesser degree in testis and cardiac muscle. Barely detected in liver, spleen, thymus, kidney, skeletal muscle, and brain. Among the white adipose depots, gonadal fat showed the highest level of expression compared with inguinal and renal white adipose tissues.

It localises to the lipid droplet. It is found in the cell membrane. Its subcellular location is the cytoplasm. It catalyses the reaction a triacylglycerol + H2O = a diacylglycerol + a fatty acid + H(+). The enzyme catalyses a triacylglycerol + H2O = a 1,2-diacylglycerol + a fatty acid + H(+). It carries out the reaction a triacylglycerol + H2O = a 1,3-diacylglycerol + a fatty acid + H(+). The catalysed reaction is a triacyl-sn-glycerol + H2O = a 2,3-diacyl-sn-glycerol + a fatty acid + H(+). It catalyses the reaction a triacyl-sn-glycerol + H2O = a 1,3-diacyl-sn-glycerol + a fatty acid + H(+). The enzyme catalyses 1,2,3-tri-(9Z-octadecenoyl)-glycerol + H2O = 1,3-di-(9Z-octadecenoyl)-glycerol + (9Z)-octadecenoate + H(+). It carries out the reaction 1,2,3-tri-(9Z)-hexadecenoylglycerol + H2O = 1,3-di-(9Z)-hexadecenoylglycerol + (9Z)-hexadecenoate + H(+). The catalysed reaction is 1,2,3-tri-(9Z,12Z)-octadecadienoylglycerol + H2O = 1,3-di-(9Z,12Z)-octadecadienoylglycerol + (9Z,12Z)-octadecadienoate + H(+). It catalyses the reaction 1,2,3-tri-(9Z,12Z,15Z)-octadecatrienoylglycerol + H2O = 1,3-di-(9Z,12Z,15Z)-octadecatrienoylglycerol + (9Z,12Z,15Z)-octadecatrienoate + H(+). The enzyme catalyses 1,3-di-(9Z)-octadecenoyl-2-hexadecanoylglycerol + H2O = 1,3-di-(9Z-octadecenoyl)-glycerol + hexadecanoate + H(+). It carries out the reaction 1,2-di-(9Z)-octadecenoyl-3-hexadecanoyl-sn-glycerol + H2O = 1-(9Z)-octadecenoyl-3-hexadecanoyl-sn-glycerol + (9Z)-octadecenoate + H(+). The catalysed reaction is 1-hexadecanoyl-2,3-di-(9Z)-octadecenoyl-sn-glycerol + H2O = 1-hexadecanoyl-3-(9Z)-octadecenoyl-sn-glycerol + (9Z)-octadecenoate + H(+). It catalyses the reaction 1,2,3-tri-(9Z-octadecenoyl)-glycerol + H2O = 2,3-di-(9Z)-octadecenoyl-sn-glycerol + (9Z)-octadecenoate + H(+). The enzyme catalyses 1,2,3-tri-(9Z)-hexadecenoylglycerol + H2O = 2,3-di-(9Z)-hexadecenoyl-sn-glycerol + (9Z)-hexadecenoate + H(+). It carries out the reaction 1,2,3-tri-(9Z,12Z)-octadecadienoylglycerol + H2O = 2,3-di-(9Z,12Z)-octadecadienoyl-sn-glycerol + (9Z,12Z)-octadecadienoate + H(+). The catalysed reaction is 1,2,3-tri-(9Z,12Z,15Z)-octadecatrienoylglycerol + H2O = 2,3-di-(9Z,12Z,15Z)-octadecatrienoyl-sn-glycerol + (9Z,12Z,15Z)-octadecatrienoate + H(+). It catalyses the reaction 1,3-di-(9Z)-octadecenoyl-2-hexadecanoylglycerol + H2O = 2-hexadecanoyl-3-(9Z)-octadecenoyl-sn-glycerol + (9Z)-octadecenoate + H(+). The enzyme catalyses 1-hexadecanoyl-2,3-di-(9Z)-octadecenoyl-sn-glycerol + H2O = 2,3-di-(9Z)-octadecenoyl-sn-glycerol + hexadecanoate + H(+). It carries out the reaction 1,2-di-(9Z)-octadecenoyl-3-hexadecanoyl-sn-glycerol + H2O = 2-(9Z-octadecenoyl)-3-hexadecanoyl-sn-glycerol + (9Z)-octadecenoate + H(+). The catalysed reaction is 1,2-di-(9Z-octadecenoyl)-glycerol + (9Z)-octadecenoate + H(+) = 1,2,3-tri-(9Z-octadecenoyl)-glycerol + H2O. It catalyses the reaction a 1-acylglycerol + a 1,3-diacylglycerol = a triacylglycerol + glycerol. The enzyme catalyses a 1-acylglycerol + a 1,2-diacylglycerol = a triacylglycerol + glycerol. It carries out the reaction 2 a 1-acylglycerol = a 1,2-diacylglycerol + glycerol. The catalysed reaction is a triacylglycerol + all-trans-retinol = an all-trans-retinyl ester + a diacylglycerol. It catalyses the reaction 1-(9Z-octadecenoyl)-glycerol + 1,3-di-(9Z-octadecenoyl)-glycerol = 1,2,3-tri-(9Z-octadecenoyl)-glycerol + glycerol. The enzyme catalyses 1-(9Z-octadecenoyl)-glycerol + 1,2-di-(9Z-octadecenoyl)-glycerol = 1,2,3-tri-(9Z-octadecenoyl)-glycerol + glycerol. It carries out the reaction 2 1-(9Z-octadecenoyl)-glycerol = 1,2-di-(9Z-octadecenoyl)-glycerol + glycerol. The catalysed reaction is 1,2,3-tri-(9Z-octadecenoyl)-glycerol + all-trans-retinol = all-trans-retinyl 9Z-octadecenoate + di-(9Z)-octadecenoylglycerol. It catalyses the reaction a 1,2-diacyl-sn-glycero-3-phosphocholine + H2O = a 1-acyl-sn-glycero-3-phosphocholine + a fatty acid + H(+). The enzyme catalyses 1,2,3-tri-(9Z-octadecenoyl)-glycerol + 9-hydroxy-octadecanoate = 9-(9Z-octadecenoyloxy)-octadecanoate + 2,3-di-(9Z)-octadecenoyl-sn-glycerol. It carries out the reaction 1-hexadecanoyl-2,3-di-(9Z)-octadecenoyl-sn-glycerol + 9-hydroxy-octadecanoate = 9-hexadecanoyloxy-octadecanoate + 2,3-di-(9Z)-octadecenoyl-sn-glycerol. The catalysed reaction is 1,2,3-tri-(10Z)-heptadecenoylglycerol + 9-hydroxy-octadecanoate = 2,3-di-(10Z-heptadecenoyl)-sn-glycerol + 9-(10Z-heptadecenoyloxy)-octadecanoate. It catalyses the reaction 1,2,3-tri-(9Z,12Z)-octadecadienoylglycerol + 9-hydroxy-octadecanoate = 2,3-di-(9Z,12Z)-octadecadienoyl-sn-glycerol + 9-(9Z,12Z-octadecadienoyloxy)-octadecanoate. The enzyme catalyses 1,2,3-tri-(9Z)-hexadecenoylglycerol + 9-hydroxy-octadecanoate = 2,3-di-(9Z)-hexadecenoyl-sn-glycerol + 9-(9Z-hexadecenoyloxy)-octadecanoate. It carries out the reaction 9-hydroxy-octadecanoate + 1,2-di-(9Z-octadecenoyl)-sn-glycerol = 9-(9Z-octadecenoyloxy)-octadecanoate + 2-(9Z-octadecenoyl)-glycerol. The catalysed reaction is 1-hexadecanoyl-2,3-di-(9Z)-octadecenoyl-sn-glycerol + 9-hydroxy-octadecanoate = 1-hexadecanoyl-3-(9Z)-octadecenoyl-sn-glycerol + 9-(9Z-octadecenoyloxy)-octadecanoate. It participates in glycerolipid metabolism; triacylglycerol degradation. Stimulated by PKA-dependent PLIN phosphorylation. Functionally, catalyzes the initial step in triglyceride hydrolysis in adipocyte and non-adipocyte lipid droplets. Exhibits a strong preference for the hydrolysis of long-chain fatty acid esters at the sn-2 position of the glycerol backbone and acts coordinately with LIPE/HLS and DGAT2 within the lipolytic cascade. Also possesses acylglycerol transacylase and phospholipase A2 activities. Transfers fatty acid from triglyceride to retinol, hydrolyzes retinylesters, and generates 1,3-diacylglycerol from triglycerides. Regulates adiposome size and may be involved in the degradation of adiposomes. Catalyzes the formation of an ester bond between hydroxy fatty acids and fatty acids derived from triglycerides or diglycerides to generate fatty acid esters of hydroxy fatty acids (FAHFAs) in adipocytes. Acts antagonistically with LDAH in regulation of cellular lipid stores. Inhibits LDAH-stimulated lipid droplet fusion. May play an important role in energy homeostasis. May play a role in the response of the organism to starvation, enhancing hydrolysis of triglycerides and providing free fatty acids to other tissues to be oxidized in situations of energy depletion. The polypeptide is Patatin-like phospholipase domain-containing protein 2 (Mus musculus (Mouse)).